The sequence spans 352 residues: Ion-translocating oxidoreductase complex subunit D (352 aa).

The next 5 membrane-spanning stretches (helical) occupy residues I20–G40, G42–L62, P68–S88, I89–A109, and P123–L143. Position 187 is an FMN phosphoryl threonine (T187). 5 helical membrane passes run G217 to I237, I244 to P264, L267 to L287, L301 to P321, and D322 to T342.

This sequence belongs to the NqrB/RnfD family. In terms of assembly, the complex is composed of six subunits: RsxA, RsxB, RsxC, RsxD, RsxE and RsxG. FMN is required as a cofactor.

It is found in the cell inner membrane. In terms of biological role, part of a membrane-bound complex that couples electron transfer with translocation of ions across the membrane. Required to maintain the reduced state of SoxR. This is Ion-translocating oxidoreductase complex subunit D from Escherichia fergusonii (strain ATCC 35469 / DSM 13698 / CCUG 18766 / IAM 14443 / JCM 21226 / LMG 7866 / NBRC 102419 / NCTC 12128 / CDC 0568-73).